The primary structure comprises 197 residues: Probable S-adenosylmethionine-dependent methyltransferase MJ0882 (197 aa).

Residues 63 to 67 (GCGYG), Asp84, and Asn129 contribute to the S-adenosyl-L-methionine site. Substrate is bound at residue 129–132 (NPPI).

The protein belongs to the methyltransferase superfamily.

Its function is as follows. Probable methyltransferase that uses S-adenosylmethionine as the methyl donor. Binds neither NAD nor NADP in vitro. This is Probable S-adenosylmethionine-dependent methyltransferase MJ0882 from Methanocaldococcus jannaschii (strain ATCC 43067 / DSM 2661 / JAL-1 / JCM 10045 / NBRC 100440) (Methanococcus jannaschii).